We begin with the raw amino-acid sequence, 287 residues long: Ventral anterior homeobox 1b (287 aa).

Positions 1–33 (MFEKTRDMDVRCNIEENGRISKPKDNKEIRESQ) are enriched in basic and acidic residues. Positions 1 to 55 (MFEKTRDMDVRCNIEENGRISKPKDNKEIRESQSKMPSTYPAPGSSEGCAKNKSS) are disordered. The segment at residues 89 to 148 (PKRTRTSFTAEQLYRLEMEFQRCQYVVGRERTELARQLNLSETQVKVWFQNRRTKQKKDQ) is a DNA-binding region (homeobox).

This sequence belongs to the EMX homeobox family.

Its subcellular location is the nucleus. Its function is as follows. Involved in ventral eye development. This chain is Ventral anterior homeobox 1b (vax1-b), found in Xenopus laevis (African clawed frog).